Here is a 269-residue protein sequence, read N- to C-terminus: MDKYAVWGNPIAQSKSPQIHQIFANQTQQQMEYVAMLGDEQDFEQQLRVFFEKGAKGCNITAPFKERAFQLADLHSERCLTAEACNTLKKLDDGRLYGDNTDGAGLVSDLQRLGWLKPEQTILILGAGGATKGVLLPLLQAKQHIVLANRTLSKAEDLAQKFAQYGQIQAVELDNIPVQSFDLIINATSSGLHGQTVQMNPEILQNATALYDMQYAKQADTPFVALCKQLGKQNVSDGFGMLVAQAAHAFHLWRGVMPEFEALLEQEWL.

Shikimate contacts are provided by residues 14–16 (SKS) and Thr61. The Proton acceptor role is filled by Lys65. NADP(+) is bound at residue Glu77. Shikimate contacts are provided by Asn86 and Asp102. Residues 126 to 130 (GAGGA), 149 to 154 (NRTLSK), and Met213 each bind NADP(+). Position 215 (Tyr215) interacts with shikimate. Gly238 is a binding site for NADP(+).

This sequence belongs to the shikimate dehydrogenase family. Homodimer.

The enzyme catalyses shikimate + NADP(+) = 3-dehydroshikimate + NADPH + H(+). It participates in metabolic intermediate biosynthesis; chorismate biosynthesis; chorismate from D-erythrose 4-phosphate and phosphoenolpyruvate: step 4/7. Its function is as follows. Involved in the biosynthesis of the chorismate, which leads to the biosynthesis of aromatic amino acids. Catalyzes the reversible NADPH linked reduction of 3-dehydroshikimate (DHSA) to yield shikimate (SA). This Pasteurella multocida (strain Pm70) protein is Shikimate dehydrogenase (NADP(+)).